The chain runs to 85 residues: Large ribosomal subunit protein bL27 (85 aa).

Residues 1-20 (MAHKKAGGSSRNGRDSEAKR) are disordered.

It belongs to the bacterial ribosomal protein bL27 family.

This chain is Large ribosomal subunit protein bL27, found in Aeromonas salmonicida (strain A449).